The chain runs to 420 residues: Glucose-1-phosphate adenylyltransferase (420 aa).

Alpha-D-glucose 1-phosphate-binding positions include Tyr-107, Gly-172, 187 to 188 (EK), and Ser-205.

Belongs to the bacterial/plant glucose-1-phosphate adenylyltransferase family. As to quaternary structure, homotetramer.

The catalysed reaction is alpha-D-glucose 1-phosphate + ATP + H(+) = ADP-alpha-D-glucose + diphosphate. The protein operates within glycan biosynthesis; glycogen biosynthesis. Functionally, involved in the biosynthesis of ADP-glucose, a building block required for the elongation reactions to produce glycogen. Catalyzes the reaction between ATP and alpha-D-glucose 1-phosphate (G1P) to produce pyrophosphate and ADP-Glc. The polypeptide is Glucose-1-phosphate adenylyltransferase (Rhizobium etli (strain CIAT 652)).